The sequence spans 581 residues: Major facilitator superfamily multidrug transporter NAG4 (581 aa).

Over residues Met-1–Val-14 the composition is skewed to polar residues. The segment at Met-1–Ser-43 is disordered. N-linked (GlcNAc...) asparagine glycosylation is present at Asn-11. The segment covering Asp-15–Gln-27 has biased composition (basic and acidic residues). Asn-125 carries an N-linked (GlcNAc...) asparagine glycan. 12 consecutive transmembrane segments (helical) span residues Trp-132–Val-152, Val-169–Phe-189, Lys-199–Ala-219, Leu-230–Ile-250, Ala-261–Leu-281, Trp-290–Val-310, Ile-365–Phe-385, Gly-403–Phe-423, Leu-447–Ser-467, Trp-471–Leu-491, Ala-510–Ile-530, and Leu-544–Ala-564.

Belongs to the major facilitator superfamily. DHA1 family. Polyamines/proton antiporter (TC 2.A.1.2.16) subfamily.

Its subcellular location is the cell membrane. In terms of biological role, MFS transporter involved in N-acetylglucosamine (GlcNAc) uptake. Confers resistance to cycloheximide, 4-nitroquinoline-N-oxide, and 1,10-phenanthroline, and contributes to virulence. The protein is Major facilitator superfamily multidrug transporter NAG4 of Candida albicans (strain SC5314 / ATCC MYA-2876) (Yeast).